The following is a 577-amino-acid chain: Arginine--tRNA ligase (577 aa).

Positions 123 to 133 match the 'HIGH' region motif; that stretch reads PNVAKEMHVGH.

The protein belongs to the class-I aminoacyl-tRNA synthetase family. In terms of assembly, monomer.

It localises to the cytoplasm. The catalysed reaction is tRNA(Arg) + L-arginine + ATP = L-arginyl-tRNA(Arg) + AMP + diphosphate. The polypeptide is Arginine--tRNA ligase (Cronobacter sakazakii (strain ATCC BAA-894) (Enterobacter sakazakii)).